The primary structure comprises 595 residues: NADH-quinone oxidoreductase subunit C/D (595 aa).

An NADH dehydrogenase I subunit C region spans residues methionine 1–glutamine 186. The segment at aspartate 210–arginine 595 is NADH dehydrogenase I subunit D.

In the N-terminal section; belongs to the complex I 30 kDa subunit family. The protein in the C-terminal section; belongs to the complex I 49 kDa subunit family. As to quaternary structure, NDH-1 is composed of 13 different subunits. Subunits NuoB, CD, E, F, and G constitute the peripheral sector of the complex.

Its subcellular location is the cell inner membrane. It catalyses the reaction a quinone + NADH + 5 H(+)(in) = a quinol + NAD(+) + 4 H(+)(out). Its function is as follows. NDH-1 shuttles electrons from NADH, via FMN and iron-sulfur (Fe-S) centers, to quinones in the respiratory chain. The immediate electron acceptor for the enzyme in this species is believed to be ubiquinone. Couples the redox reaction to proton translocation (for every two electrons transferred, four hydrogen ions are translocated across the cytoplasmic membrane), and thus conserves the redox energy in a proton gradient. In Acinetobacter baylyi (strain ATCC 33305 / BD413 / ADP1), this protein is NADH-quinone oxidoreductase subunit C/D.